We begin with the raw amino-acid sequence, 400 residues long: Argininosuccinate synthase (400 aa).

ATP contacts are provided by residues 11 to 19 (AYSGGLDTS) and A38. L-citrulline-binding residues include Y89 and S94. Position 119 (G119) interacts with ATP. 3 residues coordinate L-aspartate: T121, N125, and D126. Position 125 (N125) interacts with L-citrulline. 5 residues coordinate L-citrulline: R129, S178, S187, E263, and Y275.

It belongs to the argininosuccinate synthase family. Type 1 subfamily. Homotetramer.

It localises to the cytoplasm. The enzyme catalyses L-citrulline + L-aspartate + ATP = 2-(N(omega)-L-arginino)succinate + AMP + diphosphate + H(+). The protein operates within amino-acid biosynthesis; L-arginine biosynthesis; L-arginine from L-ornithine and carbamoyl phosphate: step 2/3. The protein is Argininosuccinate synthase of Desulfatibacillum aliphaticivorans.